Here is a 439-residue protein sequence, read N- to C-terminus: Xaa-Pro dipeptidase (439 aa).

5 residues coordinate Mn(2+): D244, D255, H335, E380, and E419.

It belongs to the peptidase M24B family. Bacterial-type prolidase subfamily. Mn(2+) is required as a cofactor.

The enzyme catalyses Xaa-L-Pro dipeptide + H2O = an L-alpha-amino acid + L-proline. Functionally, splits dipeptides with a prolyl residue in the C-terminal position. In Shewanella oneidensis (strain ATCC 700550 / JCM 31522 / CIP 106686 / LMG 19005 / NCIMB 14063 / MR-1), this protein is Xaa-Pro dipeptidase.